A 634-amino-acid chain; its full sequence is Threonine--tRNA ligase (634 aa).

Positions 1-142 are editing domain; that stretch reads MQLLLIHSDY…LSRSIRPEGA (142 aa). Residues 214–513 form a catalytic region; sequence PHVELMRRLE…TEEGKVPMLP (300 aa). Zn(2+)-binding residues include Cys306, His358, and His482.

The protein belongs to the class-II aminoacyl-tRNA synthetase family. In terms of assembly, homodimer. The cofactor is Zn(2+).

It localises to the cytoplasm. It carries out the reaction tRNA(Thr) + L-threonine + ATP = L-threonyl-tRNA(Thr) + AMP + diphosphate + H(+). Functionally, catalyzes the attachment of threonine to tRNA(Thr) in a two-step reaction: L-threonine is first activated by ATP to form Thr-AMP and then transferred to the acceptor end of tRNA(Thr). Edits incorrectly charged L-seryl-tRNA(Thr) probably via its editing domain (tested with total bovine tRNA). Activates L-serine, but does not detectably transfer it to tRNA (tested with total bovine tRNA). This chain is Threonine--tRNA ligase, found in Methanosarcina mazei (strain ATCC BAA-159 / DSM 3647 / Goe1 / Go1 / JCM 11833 / OCM 88) (Methanosarcina frisia).